The chain runs to 459 residues: Cysteine--tRNA ligase (459 aa).

Cys28 contacts Zn(2+). The short motif at 30–40 (VTVYDLCHFGH) is the 'HIGH' region element. Zn(2+) is bound by residues Cys209, His234, and Glu238. The short motif at 266 to 270 (KMSKS) is the 'KMSKS' region element. Position 269 (Lys269) interacts with ATP.

Belongs to the class-I aminoacyl-tRNA synthetase family. Monomer. The cofactor is Zn(2+).

It is found in the cytoplasm. It carries out the reaction tRNA(Cys) + L-cysteine + ATP = L-cysteinyl-tRNA(Cys) + AMP + diphosphate. This Actinobacillus pleuropneumoniae serotype 5b (strain L20) protein is Cysteine--tRNA ligase.